Consider the following 533-residue polypeptide: MPVSTLQQEIRRRRTFAIISHPDAGKTTLTEKLLWFGGAIQMAGAVRARKASRHATSDWMELEKQRGISVTSSVMQFPYRNDGGDYIVNLLDTPGHEDFSEDTYRTLTAVDSAVMVIDSVNGVEAQTIKLLNVCRLRSTPILTFINKLDREGRAPIELLDEIENVLQIQCAPMTWPIGMGKSFRGVYHLVNDTVQLFDPKAETEKGATAGMIQGLDNPELDRVLGSQAEELRIDIELVRGASHTFDKDLFLAGKQCPVYFGSAVNNFGVQSLLDALVGLSPEPLARATQTREVAPLEDKFTGFVFKIQANMDPKHRDRIAFVRVCSGRFERGMKLLQVSTGKTVAINNAITFMAQDRNTTEEAYAGDIIGVPNHGTIRLGDAFTEGEPLRFTGIPSFAPEYFRRARLNNPLKTKQLQKGLQQLAEEGATQMFRPLASNDLVLGAVGTLQFDVVAHRLEYEYGVDAIFEPHECATARWLKGKPEDIDKLIDKAGHNVAVDGAGDYVYLAPSQVNLRLTQERFPDIQFMETREVV.

In terms of domain architecture, tr-type G spans 11–284 (RRRRTFAIIS…ALVGLSPEPL (274 aa)). Residues 20-27 (SHPDAGKT), 92-96 (DTPGH), and 146-149 (NKLD) each bind GTP.

Belongs to the TRAFAC class translation factor GTPase superfamily. Classic translation factor GTPase family. PrfC subfamily.

The protein resides in the cytoplasm. In terms of biological role, increases the formation of ribosomal termination complexes and stimulates activities of RF-1 and RF-2. It binds guanine nucleotides and has strong preference for UGA stop codons. It may interact directly with the ribosome. The stimulation of RF-1 and RF-2 is significantly reduced by GTP and GDP, but not by GMP. In Ralstonia nicotianae (strain ATCC BAA-1114 / GMI1000) (Ralstonia solanacearum), this protein is Peptide chain release factor 3.